A 145-amino-acid chain; its full sequence is 3-hydroxyacyl-[acyl-carrier-protein] dehydratase FabZ (145 aa).

Residue H48 is part of the active site.

The protein belongs to the thioester dehydratase family. FabZ subfamily.

The protein localises to the cytoplasm. It catalyses the reaction a (3R)-hydroxyacyl-[ACP] = a (2E)-enoyl-[ACP] + H2O. In terms of biological role, involved in unsaturated fatty acids biosynthesis. Catalyzes the dehydration of short chain beta-hydroxyacyl-ACPs and long chain saturated and unsaturated beta-hydroxyacyl-ACPs. The polypeptide is 3-hydroxyacyl-[acyl-carrier-protein] dehydratase FabZ (Campylobacter hominis (strain ATCC BAA-381 / DSM 21671 / CCUG 45161 / LMG 19568 / NCTC 13146 / CH001A)).